Consider the following 405-residue polypeptide: Argininosuccinate synthase (405 aa).

Residues 10–18 (AYSGGLDTS) and A37 each bind ATP. Positions 88 and 93 each coordinate L-citrulline. G118 provides a ligand contact to ATP. Residues T120, N124, and D125 each coordinate L-aspartate. An L-citrulline-binding site is contributed by N124. Positions 128, 179, 188, 264, and 276 each coordinate L-citrulline.

Belongs to the argininosuccinate synthase family. Type 1 subfamily. Homotetramer.

It is found in the cytoplasm. It catalyses the reaction L-citrulline + L-aspartate + ATP = 2-(N(omega)-L-arginino)succinate + AMP + diphosphate + H(+). It functions in the pathway amino-acid biosynthesis; L-arginine biosynthesis; L-arginine from L-ornithine and carbamoyl phosphate: step 2/3. The chain is Argininosuccinate synthase from Pseudomonas fluorescens (strain Pf0-1).